We begin with the raw amino-acid sequence, 227 residues long: Ribonuclease 3 (227 aa).

The 128-residue stretch at 3-130 (TNAISKIIKY…LIGAIYLDGG (128 aa)) folds into the RNase III domain. Position 43 (glutamate 43) interacts with Mg(2+). Aspartate 47 is an active-site residue. Residues asparagine 116 and glutamate 119 each coordinate Mg(2+). Glutamate 119 is a catalytic residue. The DRBM domain maps to 155-224 (DAKTILQEWA…ASLMLAKINY (70 aa)).

It belongs to the ribonuclease III family. As to quaternary structure, homodimer. Mg(2+) serves as cofactor.

It localises to the cytoplasm. The enzyme catalyses Endonucleolytic cleavage to 5'-phosphomonoester.. Functionally, digests double-stranded RNA. Involved in the processing of primary rRNA transcript to yield the immediate precursors to the large and small rRNAs (23S and 16S). Processes some mRNAs, and tRNAs when they are encoded in the rRNA operon. Processes pre-crRNA and tracrRNA of type II CRISPR loci if present in the organism. In Ehrlichia ruminantium (strain Gardel), this protein is Ribonuclease 3.